Reading from the N-terminus, the 114-residue chain is Large ribosomal subunit protein bL20c (114 aa).

It belongs to the bacterial ribosomal protein bL20 family.

It localises to the plastid. It is found in the chloroplast. Binds directly to 23S ribosomal RNA and is necessary for the in vitro assembly process of the 50S ribosomal subunit. It is not involved in the protein synthesizing functions of that subunit. The polypeptide is Large ribosomal subunit protein bL20c (rpl20) (Trieres chinensis (Marine centric diatom)).